We begin with the raw amino-acid sequence, 379 residues long: Deoxyhypusine synthase (379 aa).

Residues 108 to 112 (SNLIS), 134 to 136 (TAG), Glu-140, and Asp-257 each bind NAD(+). 139-140 (EE) provides a ligand contact to spermidine. Asp-262 contacts spermidine. Residue Gly-304 participates in NAD(+) binding. His-309 is a spermidine binding site. An NAD(+)-binding site is contributed by 329–330 (TG). Residues 335–337 (GSD) and 344–350 (EAVSWGK) each bind spermidine. The active-site Nucleophile is the Lys-350. 363–364 (DA) is an NAD(+) binding site.

The protein belongs to the deoxyhypusine synthase family. The cofactor is NAD(+).

It carries out the reaction [eIF5A protein]-L-lysine + spermidine = [eIF5A protein]-deoxyhypusine + propane-1,3-diamine. Its pathway is protein modification; eIF5A hypusination. Its function is as follows. Catalyzes the NAD-dependent oxidative cleavage of spermidine and the subsequent transfer of the butylamine moiety of spermidine to the epsilon-amino group of a specific lysine residue of the eIF-5A precursor protein to form the intermediate deoxyhypusine residue. This chain is Deoxyhypusine synthase (DYS1), found in Kluyveromyces lactis (strain ATCC 8585 / CBS 2359 / DSM 70799 / NBRC 1267 / NRRL Y-1140 / WM37) (Yeast).